Consider the following 733-residue polypeptide: MDKIWRELGLTDEEYEKIISILGREPNITEIGMYSVMWSEHCAYKNSKPLLKYLPTKGERVIQGPGENAGVLDIGDNLAVVMKIESHNHPSAIEPYQGAATGVGGIIRDIFTMGARPIALLDSLRFGIPDDKRTKYLIENVVAGIADYGNCIGIPTVGGDTYFEESYKGNPLVNAMCVGIVEKDKIKKGIAKGIGNPVMIVGATTGRDGIGGASFASQELSEESEEKRPSVQVGDPFMEKLLLEACLELFETDAVVAIQDMGAAGLTSSSCEMASRGGVGMEIDLDKVPLREKGMTPYEIMLSESQERMLVVVEKGKEEDVQKVFKKWGLNAATIGKITDDGMIRVIKEGKIVAEVPAKSLAEDAPQYIREEEVPKWQEDVNKLNINEVKPPEDMNKALKDVISSLNVASKEWIYSQYDYMVRTDTAITPGMDAAVVRIKGTKKAIALTTDCNGRYCYLDPYIGSQIAVAEAARNLCMVGAKPIGVTDCLNFGNPEKKEIYWQLKNSIFGIAKACETLQIPVVSGNVSLYNENEEGAIYPTPVIGMAGLIEDVSKICTMDFKKERDVIIILGENKGEIGGSEYLKVCFGMVKGQPPQIDLEEEKRLQELVLKLIEEGLINSSHDISEGGFAAALVESAISGKKGAKISLQTSLREDVELFSESPPRALITVSPEKVEEVLKIAYEYQVPAQKVGVVEGKKIAIEVNGKKIIDLPLEVLEESWRGRIKWEMERN.

His-41 is a catalytic residue. 2 residues coordinate ATP: Tyr-44 and Lys-83. Glu-85 provides a ligand contact to Mg(2+). Residues 86-89 (SHNH) and Arg-108 contribute to the substrate site. Residue His-87 is the Proton acceptor of the active site. Asp-109 is a binding site for Mg(2+). The disordered stretch occupies residues 212-232 (GASFASQELSEESEEKRPSVQ). Gln-232 is a binding site for substrate. Residue Asp-260 participates in Mg(2+) binding. 304 to 306 (ESQ) is a binding site for substrate. 2 residues coordinate ATP: Asp-488 and Gly-525. Asn-526 provides a ligand contact to Mg(2+). Ser-528 provides a ligand contact to substrate.

This sequence belongs to the FGAMS family. Monomer. Part of the FGAM synthase complex composed of 1 PurL, 1 PurQ and 2 PurS subunits.

It is found in the cytoplasm. It catalyses the reaction N(2)-formyl-N(1)-(5-phospho-beta-D-ribosyl)glycinamide + L-glutamine + ATP + H2O = 2-formamido-N(1)-(5-O-phospho-beta-D-ribosyl)acetamidine + L-glutamate + ADP + phosphate + H(+). The protein operates within purine metabolism; IMP biosynthesis via de novo pathway; 5-amino-1-(5-phospho-D-ribosyl)imidazole from N(2)-formyl-N(1)-(5-phospho-D-ribosyl)glycinamide: step 1/2. Its function is as follows. Part of the phosphoribosylformylglycinamidine synthase complex involved in the purines biosynthetic pathway. Catalyzes the ATP-dependent conversion of formylglycinamide ribonucleotide (FGAR) and glutamine to yield formylglycinamidine ribonucleotide (FGAM) and glutamate. The FGAM synthase complex is composed of three subunits. PurQ produces an ammonia molecule by converting glutamine to glutamate. PurL transfers the ammonia molecule to FGAR to form FGAM in an ATP-dependent manner. PurS interacts with PurQ and PurL and is thought to assist in the transfer of the ammonia molecule from PurQ to PurL. The polypeptide is Phosphoribosylformylglycinamidine synthase subunit PurL (Thermoanaerobacter sp. (strain X514)).